Consider the following 72-residue polypeptide: DNA-directed RNA polymerase subunit epsilon (72 aa).

This sequence belongs to the RNA polymerase subunit epsilon family. RNAP is composed of a core of 2 alpha, a beta and a beta' subunit. The core is associated with a delta subunit, and at least one of epsilon or omega. When a sigma factor is associated with the core the holoenzyme is formed, which can initiate transcription.

The enzyme catalyses RNA(n) + a ribonucleoside 5'-triphosphate = RNA(n+1) + diphosphate. In terms of biological role, a non-essential component of RNA polymerase (RNAP). The chain is DNA-directed RNA polymerase subunit epsilon from Staphylococcus aureus (strain JH1).